The sequence spans 101 residues: NAD(P)H-quinone oxidoreductase subunit 4L, chloroplastic (101 aa).

3 helical membrane-spanning segments follow: residues 2–22, 32–52, and 61–81; these read MFEH…YGLI, MCLE…SDLF, and IFSI…LAIV.

The protein belongs to the complex I subunit 4L family. As to quaternary structure, NDH is composed of at least 16 different subunits, 5 of which are encoded in the nucleus.

The protein resides in the plastid. Its subcellular location is the chloroplast thylakoid membrane. The catalysed reaction is a plastoquinone + NADH + (n+1) H(+)(in) = a plastoquinol + NAD(+) + n H(+)(out). The enzyme catalyses a plastoquinone + NADPH + (n+1) H(+)(in) = a plastoquinol + NADP(+) + n H(+)(out). Functionally, NDH shuttles electrons from NAD(P)H:plastoquinone, via FMN and iron-sulfur (Fe-S) centers, to quinones in the photosynthetic chain and possibly in a chloroplast respiratory chain. The immediate electron acceptor for the enzyme in this species is believed to be plastoquinone. Couples the redox reaction to proton translocation, and thus conserves the redox energy in a proton gradient. This Lemna minor (Common duckweed) protein is NAD(P)H-quinone oxidoreductase subunit 4L, chloroplastic.